The primary structure comprises 919 residues: Protein phosphatase 1 regulatory subunit 37 (919 aa).

LRR repeat units follow at residues 340–361, 368–388, 396–417, 425–445, 454–474, and 482–502; these read SLQY…FVAR, SLTV…MLLA, NLRE…AQLG, NIQI…AYVC, GLVT…GYLA, and SLET…HKLK. 2 disordered regions span residues 626-716 and 790-866; these read ATED…TIPS and APSQ…APLP. Positions 631 to 640 are enriched in acidic residues; it reads THEEEEEEEA. The span at 641 to 658 shows a compositional bias: basic and acidic residues; sequence SPLKKIEEETTDALKDAT. Over residues 677–690 the composition is skewed to acidic residues; sequence PQDDSDSDTEDEET. A compositionally biased stretch (low complexity) spans 691–701; that stretch reads PTNTSLTSTSP. Composition is skewed to polar residues over residues 791 to 801 and 811 to 837; these read PSQTQNSTQPT and DAQQ…LTES. Positions 833 to 861 form a coiled coil; that stretch reads QLTESVSEEEQKKAETLNNEADINEDANT.

The protein belongs to the PPP1R37 family.

In terms of biological role, may inhibit phosphatase activity of protein phosphatase 1 (PP1) complexes. This chain is Protein phosphatase 1 regulatory subunit 37 (ppp1r37), found in Danio rerio (Zebrafish).